Consider the following 339-residue polypeptide: UDP-3-O-acylglucosamine N-acyltransferase (339 aa).

His-251 serves as the catalytic Proton acceptor.

It belongs to the transferase hexapeptide repeat family. LpxD subfamily. As to quaternary structure, homotrimer.

The enzyme catalyses a UDP-3-O-[(3R)-3-hydroxyacyl]-alpha-D-glucosamine + a (3R)-hydroxyacyl-[ACP] = a UDP-2-N,3-O-bis[(3R)-3-hydroxyacyl]-alpha-D-glucosamine + holo-[ACP] + H(+). It functions in the pathway bacterial outer membrane biogenesis; LPS lipid A biosynthesis. Catalyzes the N-acylation of UDP-3-O-acylglucosamine using 3-hydroxyacyl-ACP as the acyl donor. Is involved in the biosynthesis of lipid A, a phosphorylated glycolipid that anchors the lipopolysaccharide to the outer membrane of the cell. This chain is UDP-3-O-acylglucosamine N-acyltransferase, found in Paramagnetospirillum magneticum (strain ATCC 700264 / AMB-1) (Magnetospirillum magneticum).